Here is a 235-residue protein sequence, read N- to C-terminus: Putative cobalt transport protein CbiM 2 (235 aa).

7 helical membrane-spanning segments follow: residues leucine 8–valine 28, glycine 40–methionine 60, glycine 74–isoleucine 94, threonine 107–tyrosine 127, leucine 135–valine 155, leucine 160–serine 180, and isoleucine 185–phenylalanine 205.

The protein belongs to the CbiM family. Forms an energy-coupling factor (ECF) transporter complex composed of an ATP-binding protein (A component, CbiO), a transmembrane protein (T component, CbiQ) and 2 possible substrate-capture proteins (S components, CbiM and CbiN) of unknown stoichimetry.

The protein localises to the cell membrane. The protein operates within cofactor biosynthesis; adenosylcobalamin biosynthesis. Part of the energy-coupling factor (ECF) transporter complex CbiMNOQ involved in cobalt import. The chain is Putative cobalt transport protein CbiM 2 from Methanosarcina barkeri (strain Fusaro / DSM 804).